We begin with the raw amino-acid sequence, 443 residues long: Probable D-serine dehydratase (443 aa).

Lysine 116 carries the post-translational modification N6-(pyridoxal phosphate)lysine.

It belongs to the serine/threonine dehydratase family. DsdA subfamily. Pyridoxal 5'-phosphate is required as a cofactor.

The catalysed reaction is D-serine = pyruvate + NH4(+). This Bacillus cereus (strain G9842) protein is Probable D-serine dehydratase.